A 391-amino-acid chain; its full sequence is ATP phosphoribosyltransferase regulatory subunit (391 aa).

This sequence belongs to the class-II aminoacyl-tRNA synthetase family. HisZ subfamily. As to quaternary structure, heteromultimer composed of HisG and HisZ subunits.

It is found in the cytoplasm. The protein operates within amino-acid biosynthesis; L-histidine biosynthesis; L-histidine from 5-phospho-alpha-D-ribose 1-diphosphate: step 1/9. Required for the first step of histidine biosynthesis. May allow the feedback regulation of ATP phosphoribosyltransferase activity by histidine. The sequence is that of ATP phosphoribosyltransferase regulatory subunit from Nitrosomonas europaea (strain ATCC 19718 / CIP 103999 / KCTC 2705 / NBRC 14298).